Reading from the N-terminus, the 261-residue chain is 14-3-3-like protein A (261 aa).

It belongs to the 14-3-3 family.

The protein is 14-3-3-like protein A of Vicia faba (Broad bean).